Consider the following 226-residue polypeptide: Large ribosomal subunit protein uL1 (226 aa).

Belongs to the universal ribosomal protein uL1 family. In terms of assembly, part of the 50S ribosomal subunit.

Its function is as follows. Binds directly to 23S rRNA. The L1 stalk is quite mobile in the ribosome, and is involved in E site tRNA release. Functionally, protein L1 is also a translational repressor protein, it controls the translation of the L11 operon by binding to its mRNA. The chain is Large ribosomal subunit protein uL1 from Borreliella afzelii (strain PKo) (Borrelia afzelii).